A 142-amino-acid polypeptide reads, in one-letter code: Putative pre-16S rRNA nuclease (142 aa).

Belongs to the YqgF nuclease family.

Its subcellular location is the cytoplasm. Its function is as follows. Could be a nuclease involved in processing of the 5'-end of pre-16S rRNA. The chain is Putative pre-16S rRNA nuclease from Nitratidesulfovibrio vulgaris (strain DSM 19637 / Miyazaki F) (Desulfovibrio vulgaris).